The primary structure comprises 332 residues: Tryptophan--tRNA ligase (332 aa).

ATP-binding positions include 11–13 (TST) and 19–20 (GN). The short motif at 12 to 20 (STGKLTLGN) is the 'HIGH' region element. D140 is a binding site for L-tryptophan. ATP-binding positions include 152 to 154 (GQD), I191, and 200 to 204 (KMSKS). The short motif at 200 to 204 (KMSKS) is the 'KMSKS' region element.

This sequence belongs to the class-I aminoacyl-tRNA synthetase family. In terms of assembly, homodimer.

The protein localises to the cytoplasm. It carries out the reaction tRNA(Trp) + L-tryptophan + ATP = L-tryptophyl-tRNA(Trp) + AMP + diphosphate + H(+). Catalyzes the attachment of tryptophan to tRNA(Trp). This Mycoplasmopsis pulmonis (strain UAB CTIP) (Mycoplasma pulmonis) protein is Tryptophan--tRNA ligase.